The sequence spans 189 residues: UPF0301 protein RAF_ORF0041 (189 aa).

Belongs to the UPF0301 (AlgH) family.

In Rickettsia africae (strain ESF-5), this protein is UPF0301 protein RAF_ORF0041.